Consider the following 388-residue polypeptide: Carbamoyl phosphate synthase small chain (388 aa).

Residues 1–198 (MSQDLLPGVT…WPEGYAKLDK (198 aa)) are CPSase. L-glutamine contacts are provided by Ser-53, Gly-250, and Gly-252. One can recognise a Glutamine amidotransferase type-1 domain in the interval 202-388 (EVVVIDYGVK…RFAGLMDAAK (187 aa)). Cys-279 (nucleophile) is an active-site residue. L-glutamine contacts are provided by Leu-280, Gln-283, Asn-321, Gly-323, and Phe-324. Catalysis depends on residues His-363 and Glu-365.

Belongs to the CarA family. Composed of two chains; the small (or glutamine) chain promotes the hydrolysis of glutamine to ammonia, which is used by the large (or ammonia) chain to synthesize carbamoyl phosphate. Tetramer of heterodimers (alpha,beta)4.

It carries out the reaction hydrogencarbonate + L-glutamine + 2 ATP + H2O = carbamoyl phosphate + L-glutamate + 2 ADP + phosphate + 2 H(+). The catalysed reaction is L-glutamine + H2O = L-glutamate + NH4(+). Its pathway is amino-acid biosynthesis; L-arginine biosynthesis; carbamoyl phosphate from bicarbonate: step 1/1. It functions in the pathway pyrimidine metabolism; UMP biosynthesis via de novo pathway; (S)-dihydroorotate from bicarbonate: step 1/3. Its function is as follows. Small subunit of the glutamine-dependent carbamoyl phosphate synthetase (CPSase). CPSase catalyzes the formation of carbamoyl phosphate from the ammonia moiety of glutamine, carbonate, and phosphate donated by ATP, constituting the first step of 2 biosynthetic pathways, one leading to arginine and/or urea and the other to pyrimidine nucleotides. The small subunit (glutamine amidotransferase) binds and cleaves glutamine to supply the large subunit with the substrate ammonia. The protein is Carbamoyl phosphate synthase small chain of Caulobacter vibrioides (strain ATCC 19089 / CIP 103742 / CB 15) (Caulobacter crescentus).